An 838-amino-acid polypeptide reads, in one-letter code: Protein translocase subunit SecA 1 (838 aa).

Residues Gln85, Gly103–Thr107, and Asp493 contribute to the ATP site. Residues Cys823, Cys825, Cys834, and His835 each coordinate Zn(2+).

The protein belongs to the SecA family. Monomer and homodimer. Part of the essential Sec protein translocation apparatus which comprises SecA, SecYEG and auxiliary proteins SecDF. Other proteins may also be involved. The cofactor is Zn(2+).

It localises to the cell membrane. It is found in the cytoplasm. It catalyses the reaction ATP + H2O + cellular proteinSide 1 = ADP + phosphate + cellular proteinSide 2.. Its function is as follows. Part of the Sec protein translocase complex. Interacts with the SecYEG preprotein conducting channel. Has a central role in coupling the hydrolysis of ATP to the transfer of proteins into and across the cell membrane, serving as an ATP-driven molecular motor driving the stepwise translocation of polypeptide chains across the membrane. The chain is Protein translocase subunit SecA 1 from Streptococcus gordonii.